Reading from the N-terminus, the 426-residue chain is Phosphoribosylamine--glycine ligase (426 aa).

An ATP-grasp domain is found at 109–312 (KEVMEAAGVA…LAGVLNAVAT (204 aa)). 138–193 (LDYFGPMYVVKDDGLAAGKGVVVTADRAEARQHIHLVHAAGNPVLLESFLDGPEVS) is an ATP binding site. Residues E282 and N284 each contribute to the Mg(2+) site.

The protein belongs to the GARS family. Mg(2+) serves as cofactor. It depends on Mn(2+) as a cofactor.

The enzyme catalyses 5-phospho-beta-D-ribosylamine + glycine + ATP = N(1)-(5-phospho-beta-D-ribosyl)glycinamide + ADP + phosphate + H(+). It participates in purine metabolism; IMP biosynthesis via de novo pathway; N(1)-(5-phospho-D-ribosyl)glycinamide from 5-phospho-alpha-D-ribose 1-diphosphate: step 2/2. The chain is Phosphoribosylamine--glycine ligase from Corynebacterium ammoniagenes (Brevibacterium ammoniagenes).